The following is an 823-amino-acid chain: Polyadenylation and cleavage factor homolog 11 (823 aa).

A CID domain is found at 3–135 (SVESAARDYR…ELDMKINKLD (133 aa)). Disordered stretches follow at residues 142–176 (NPQT…STST), 188–301 (SSTP…KTLK), 340–395 (SSAP…LPAP), 570–643 (LPAP…EKRS), and 728–755 (WLTP…VASS). Polar residues-rich tracts occupy residues 157 to 176 (APSQ…STST) and 188 to 198 (SSTPGAASASK). Basic and acidic residues predominate over residues 200–226 (VVEKTKSPGTVNKEKQVKKEPKQDPLD). Composition is skewed to low complexity over residues 227 to 242 (KLLP…SSPA) and 342 to 353 (APPFQHPQQHHP). The span at 374–390 (PQDPAPIVPVQAPPPQQ) shows a compositional bias: pro residues. Residues 571–581 (PAPARSPSSPR) show a composition bias toward low complexity. Over residues 609–624 (QPQQNARWGGANKQQN) the composition is skewed to polar residues.

The sequence is that of Polyadenylation and cleavage factor homolog 11 (pcf-11) from Caenorhabditis elegans.